The primary structure comprises 453 residues: Serine/threonine-protein kinase VRK3 (453 aa).

Positions 30 to 123 (EDGGTQSAVT…QSPQTLKRTR (94 aa)) are disordered. The segment covering 33 to 46 (GTQSAVTPHVSSVP) has biased composition (polar residues). The Nuclear localization signal motif lies at 49–64 (RRDLNSSFETSPKKVK). Residues Ser54, Ser55, Ser59, Ser82, Ser83, and Ser108 each carry the phosphoserine modification. The span at 81–101 (DSSGSDNTLTSPDRATGTRSR) shows a compositional bias: polar residues. Residues 109–123 (PLSNRQSPQTLKRTR) are compositionally biased toward polar residues. The Protein kinase domain occupies 125-436 (TTSLQALATG…TLRNSLEALL (312 aa)).

Belongs to the protein kinase superfamily. CK1 Ser/Thr protein kinase family. VRK subfamily. In terms of assembly, interacts with DUSP3. Interacts with RAN. Interacts with HSP70/HSPA1A. In terms of processing, phosphorylated at Ser-108 by CDK5; leading to protection of the cell against H2O2-induced apoptosis. Post-translationally, ubiquitinated by RNF144A. In terms of tissue distribution, expressed in liver, kidney, muscle, thymus, and bone marrow. Weakly expressed in spleen.

It localises to the nucleus. The protein resides in the cytoplasm. It carries out the reaction L-seryl-[protein] + ATP = O-phospho-L-seryl-[protein] + ADP + H(+). Plays a role in the regulation of the cell cycle by phosphorylating the nuclear envelope protein barrier-to-autointegration factor/BAF that is required for disassembly and reassembly, respectively, of the nuclear envelope during mitosis. Under normal physiological conditions, negatively regulates ERK activity along with VHR phosphatase in the nucleus, causing timely and transient action of ERK. Stress conditions activate CDK5 which phosphorylates VRK3 to increase VHR phosphatase activity and suppress prolonged ERK activation that causes cell death. For example, upon glutamate induction, promotes nuclear localization of HSP70/HSPA1A to inhibit ERK activation via VHR phosphatase. The protein is Serine/threonine-protein kinase VRK3 (Vrk3) of Mus musculus (Mouse).